The following is a 484-amino-acid chain: Palmitoyltransferase ZDHHC1 (484 aa).

Composition is skewed to polar residues over residues 1 to 11 and 19 to 34; these read MNICNKPSNKT and TAPSQDSGPSPELQGQ. Residues 1-38 are disordered; sequence MNICNKPSNKTAPEKSVWTAPSQDSGPSPELQGQRSRR. The Cytoplasmic segment spans residues 1-49; sequence MNICNKPSNKTAPEKSVWTAPSQDSGPSPELQGQRSRRNGWSWPPHPLQ. A mediates interaction with STING1 region spans residues 1–268; sequence MNICNKPSNK…GHLLCFHIYL (268 aa). Residues 50-70 form a helical membrane-spanning segment; that stretch reads IVAWLLYLFFAVIGFGVLVPL. At 71-74 the chain is on the lumenal side; that stretch reads LPHH. The chain crosses the membrane as a helical span at residues 75–95; sequence WVPAGYACMGAIFAGHLVVHL. Residues 96–182 lie on the Cytoplasmic side of the membrane; the sequence is TAVSIDPADA…YRLFLHSVAS (87 aa). Positions 131-181 constitute a DHHC domain; the sequence is LHCNLCDVDVSARSKHCSACNKCVCGFDHHCKWLNNCVGERNYRLFLHSVA. Residue C161 is the S-palmitoyl cysteine intermediate of the active site. Residues 183-203 traverse the membrane as a helical segment; it reads ALLGVLLLVLVATYVFVEFFV. The Lumenal portion of the chain corresponds to 204-238; that stretch reads NPMRLRTNQHFEVLKNHTDVWFVFLPAAPVETQAP. A helical membrane pass occupies residues 239–259; that stretch reads AILALAALLILLGLLSTALLG. Topologically, residues 260 to 484 are cytoplasmic; it reads HLLCFHIYLM…GTPGGGDGLP (225 aa). 2 disordered regions span residues 341-415 and 444-484; these read TQGQ…VHAG and LGAP…DGLP. Over residues 364-374 the composition is skewed to basic residues; the sequence is PQKKRKRRVYR. A compositionally biased stretch (basic and acidic residues) spans 380-392; the sequence is VLDRELPLPRLRE. A compositionally biased stretch (low complexity) spans 395–415; the sequence is TPSRRSSSSSDSTSASPVHAG. Over residues 475-484 the composition is skewed to gly residues; it reads GTPGGGDGLP.

It belongs to the DHHC palmitoyltransferase family. In terms of assembly, interacts with STING1; ZDHHC1 constitutively interacts with STING1 and in presence of DNA viruses activates it by promoting its cGAMP-induced oligomerization and the recruitment of downstream signaling components. Expressed at high levels in fetal lung and heart. Expressed at lower levels in fetal liver and brain. Also detected in adult islet cells of pancreas, Leydig cells of testis, retina and molecular layer of cerebellum.

Its subcellular location is the endosome membrane. The protein resides in the endoplasmic reticulum membrane. The protein localises to the golgi apparatus. It carries out the reaction L-cysteinyl-[protein] + hexadecanoyl-CoA = S-hexadecanoyl-L-cysteinyl-[protein] + CoA. In terms of biological role, palmitoyltransferase that catalyzes the addition of palmitate onto various protein substrates, such as NCDN and NLRP3. Has a palmitoyltransferase activity toward NCDN and regulates NCDN association with endosome membranes through this palmitoylation. Acts as an activator of the NLRP3 inflammasome by mediating palmitoylation of 'Cys-130' and 'Cys-958' of NLRP3, thereby promoting NLRP3 phosphorylation and activation by NEK7. Its function is as follows. Also has a palmitoyltransferase activity-independent function in DNA virus-triggered and CGAS-mediated innate immune response. Functions as an activator of STING1 by promoting its cGAMP-induced oligomerization and the recruitment of downstream signaling components. The polypeptide is Palmitoyltransferase ZDHHC1 (Mus musculus (Mouse)).